We begin with the raw amino-acid sequence, 919 residues long: Exostosin-like 3 (919 aa).

The Cytoplasmic segment spans residues 1-30 (MTGYTMLRNGGAGNGGQTCMLRWSNRIRLT). A required for interaction with REG3A region spans residues 1 to 140 (MTGYTMLRNG…LKNVISQTEH (140 aa)). Residues 31-51 (WLSFTLFVILVFFPLIAHYYL) form a helical; Signal-anchor for type II membrane protein membrane-spanning segment. Topologically, residues 52–919 (TTLDEADEAG…HDKTKCFKFI (868 aa)) are lumenal. 2 cysteine pairs are disulfide-bonded: Cys177–Cys182 and Cys188–Cys236. Asn290 is a glycosylation site (N-linked (GlcNAc...) asparagine). At Ser362 the chain carries Phosphoserine. Cys400 and Cys415 are disulfide-bonded. A glycan (N-linked (GlcNAc...) asparagine) is linked at Asn592. Residues Leu668, Arg672, Asn697, Asn723, Arg728, Asp744, Asp745, and Asp746 each contribute to the UDP-N-acetyl-alpha-D-glucosamine site. Asp746 contacts Mn(2+). N-linked (GlcNAc...) asparagine glycosylation occurs at Asn790. Cys831 and Cys879 are joined by a disulfide. UDP-N-acetyl-alpha-D-glucosamine-binding residues include Glu832, Asp833, and Arg876. Asp833 is an active-site residue.

The protein belongs to the glycosyltransferase 47 family. Homodimer; disulfide-linked. Interacts with REG3A. It depends on Mn(2+) as a cofactor. In terms of tissue distribution, ubiquitous. Expressed in keratinocytes. Expressed in pancreas.

It localises to the endoplasmic reticulum membrane. It is found in the golgi apparatus. Its subcellular location is the cell membrane. The protein resides in the nucleus. It carries out the reaction 3-O-(beta-D-GlcA-(1-&gt;3)-beta-D-Gal-(1-&gt;3)-beta-D-Gal-(1-&gt;4)-beta-D-Xyl)-L-seryl-[protein] + UDP-N-acetyl-alpha-D-glucosamine = 3-O-(alpha-D-GlcNAc-(1-&gt;4)-beta-D-GlcA-(1-&gt;3)-beta-D-Gal-(1-&gt;3)-beta-D-Gal-(1-&gt;4)-beta-D-Xyl)-L-seryl-[protein] + UDP + H(+). Its pathway is glycan metabolism; heparan sulfate biosynthesis. Glycosyltransferase which regulates the biosynthesis of heparan sulfate (HS). Initiates HS synthesis by transferring the first N-acetyl-alpha-D-glucosamine (alpha-GlcNAc) residue (GlcNAcT-I activity) to the tetrasaccharide linker (GlcA-Gal-Gal-Xyl-)Ser core linker. May also transfer alpha-GlcNAc residues during HS elongation (GlcNAcT-II activity). Lacks glucuronyl transferase II (GlcAT-II) activity. Important for both skeletal development and hematopoiesis, through the formation of HS proteoglycans (HSPGs). Through the synthesis of HS, regulates postnatal pancreatic islet maturation and insulin secretion. Its function is as follows. Receptor for REG3A, REG3B and REG3G, induces the activation of downstream signaling pathways such as PI3K-AKT or RAS-RAF-MEK-ERK signaling pathway. Required for the function of REG3A in regulating keratinocyte proliferation and differentiation. Required for the inhibition of skin inflammation mediated by REG3A through the activation of PI3K-AKT-STAT3 pathway. Required for the function of REG3A and REG3G in glucose tolerance in pancreas. Expressed in microglia, is activated by nociceptor-derived REG3G in response to endotoxins, leading to the inhibition of kynurenine pathway to prevent endotoxic death. This chain is Exostosin-like 3, found in Homo sapiens (Human).